The following is a 488-amino-acid chain: Monodehydroascorbate reductase 4, peroxisomal (488 aa).

Topologically, residues 1 to 3 are cytoplasmic; it reads MGR. A helical membrane pass occupies residues 4 to 24; the sequence is AFVYVILGGGVAAGYAALEFT. FAD contacts are provided by residues 12–15, E39, R46, K51, and 145–146; these read GGVA and RD. The Peroxisomal portion of the chain corresponds to 25 to 458; the sequence is RRGVSDGELC…SASVVMIKKP (434 aa). Residues 170–176, E194, R200, and G259 each bind NAD(+); that span reads GGYIGME. NADP(+) is bound at residue 172 to 176; that stretch reads YIGME. Residues R200 and G259 each coordinate NADP(+). D296 serves as a coordination point for FAD. Residue 312–313 coordinates NAD(+); it reads EH. 312–313 provides a ligand contact to NADP(+); it reads EH. V314 contacts FAD. Residue R318 participates in L-ascorbate binding. Y344 lines the FAD pocket. NAD(+) is bound at residue Y344. Y344 lines the NADP(+) pocket. R346 is an L-ascorbate binding site. Residues 459 to 479 traverse the membrane as a helical segment; sequence LYVWHAATGVVVAASVAAFAF. Residues 480-488 lie on the Cytoplasmic side of the membrane; the sequence is WYGRRRRRW.

Belongs to the FAD-dependent oxidoreductase family. Requires FAD as cofactor.

It is found in the peroxisome membrane. It catalyses the reaction 2 monodehydro-L-ascorbate radical + NADH + H(+) = 2 L-ascorbate + NAD(+). Its function is as follows. Catalyzes the conversion of monodehydroascorbate to ascorbate, oxidizing NADH in the process. Involved in the detoxification of H(2)O(2) that escapes the peroxisome and causes oxidative damage to oil bodies. The chain is Monodehydroascorbate reductase 4, peroxisomal from Arabidopsis thaliana (Mouse-ear cress).